The sequence spans 215 residues: Uridine kinase (215 aa).

16-23 (GASASGKS) is an ATP binding site.

The protein belongs to the uridine kinase family.

It localises to the cytoplasm. It carries out the reaction uridine + ATP = UMP + ADP + H(+). The catalysed reaction is cytidine + ATP = CMP + ADP + H(+). Its pathway is pyrimidine metabolism; CTP biosynthesis via salvage pathway; CTP from cytidine: step 1/3. It functions in the pathway pyrimidine metabolism; UMP biosynthesis via salvage pathway; UMP from uridine: step 1/1. The chain is Uridine kinase from Aliivibrio fischeri (strain ATCC 700601 / ES114) (Vibrio fischeri).